The sequence spans 536 residues: Caspase recruitment domain-containing protein 9 (536 aa).

Residue Ser2 is modified to Phosphoserine. Asp3, Cys10, and His73 together coordinate Zn(2+). Residues 6-98 enclose the CARD domain; that stretch reads NDDECWSTLE…QLYRKVTGKE (93 aa). Residues 99–116 are linker; the sequence is PARVFSMIIDASGESGLT. Residues 117–272 adopt a coiled-coil conformation; it reads QLLMTEVMKL…ELQVSVQEGK (156 aa). Lys125 is covalently cross-linked (Glycyl lysine isopeptide (Lys-Gly) (interchain with G-Cter in ubiquitin)). Thr231 is subject to Phosphothreonine; by PKC/PRKCD. Residue Ser277 is modified to Phosphoserine. A coiled-coil region spans residues 303 to 415; that stretch reads SLRKDLRQAE…LLAAEGRLKQ (113 aa). 7 positions are modified to phosphoserine: Ser424, Ser425, Ser431, Ser451, Ser461, Ser483, and Ser498. Residues 425–451 form a disordered region; it reads SDLEDSSPRNSQELSLPQDLEEDAQLS. Residues 476 to 536 are disordered; it reads LTHGMGPSSS…GSDNTDTEGS (61 aa). Over residues 487–502 the composition is skewed to basic and acidic residues; it reads PPEKERRRLKESFENY. A phosphothreonine; by CK2 mark is found at Thr531 and Thr533.

As to quaternary structure, monomer. Homodimer; homodimerization is mediated by the CARD domain which forms an extensive interaction with the adjacent linker and coiled-coil regions; leads to an autoinhibited state. Homomultimer; polymerizes following activation, forming a nucleating helical template that seeds BCL10-filament formation via a CARD-CARD interaction. Interacts (via CARD domain) with BCL10 (via CARD domain); interaction takes place following CARD9 activation and polymerization, leading to the formation of a filamentous CBM complex assembly. Component of a CBM complex (CARD9-BCL10, MALT1), composed of CARD9, BCL10 and MALT1. Interacts with RASGRF1. Interacts with NOD2 (via NACHT domain); interaction is direct. Interacts with RIPK2. Interacts with VHL; without leading to protein degradation. In terms of processing, phosphorylated at Thr-231 by PRKCD downstream of C-type lectin receptors activation: phosphorylation promotes interaction with BCL10, followed by activation of NF-kappa-B and MAP kinase p38 pathways. Phosphorylated at Thr-531 and Thr-531 by CK2 following interaction with VHL, leading to inhibit the ability to activate NF-kappa-B. Post-translationally, ubiquitinated at Lys-125 via 'Lys-27'-linked ubiquitin by TRIM62 downstream of C-type lectin receptors activation; leading to CARD9 activation, followed by activation of NF-kappa-B and MAP kinase p38 pathways. Deubiquitinated at Lys-125 by USP15, inhibiting CARD9. As to expression, specifically expressed in myeloid cells. Not expressed in non-lymphoid organs.

It is found in the cytoplasm. With respect to regulation, maintained in an autoinhibited state via homodimerization in which the CARD domain forms an extensive interaction with the adjacent linker and coiled-coil regions. Activation downstream of C-type lectin receptors, by phosphorylation by PRKCD and/or ubiquitination by TRIM62, triggers disruption of the CARD domain-coiled coil interface, CARD9 homooligomerization and BCL10 recruitment, followed by activation of NF-kappa-B and MAP kinase p38 pathways. Zinc-binding inhibits activation by stabilizing the CARD ground-state conformation and restricting its capacity to form BCL10-nucleating filaments. In terms of biological role, adapter protein that plays a key role in innate immune response against fungi by forming signaling complexes downstream of C-type lectin receptors. CARD9-mediated signals are essential for antifungal immunity against a subset of fungi from the phylum Ascomycota. Transduces signals in myeloid cells downstream of C-type lectin receptors CLEC7A (dectin-1), CLEC6A (dectin-2) and CLEC4E (Mincle), which detect pathogen-associated molecular pattern metabolites (PAMPs), such as fungal carbohydrates, and trigger CARD9 activation. Upon activation, CARD9 homooligomerizes to form a nucleating helical template that recruits BCL10 via CARD-CARD interaction, thereby promoting polymerization of BCL10 and subsequent recruitment of MALT1: this leads to activation of NF-kappa-B and MAP kinase p38 (MAPK11, MAPK12, MAPK13 and/or MAPK14) pathways which stimulate expression of genes encoding pro-inflammatory cytokines and chemokines. CARD9 signaling in antigen-presenting cells links innate sensing of fungi to the activation of adaptive immunity and provides a cytokine milieu that induces the development and subsequent of interleukin 17-producing T helper (Th17) cells. Also involved in activation of myeloid cells via classical ITAM-associated receptors and TLR: required for TLR-mediated activation of MAPK, while it is not required for TLR-induced activation of NF-kappa-B. CARD9 can also be engaged independently of BCL10: forms a complex with RASGRF1 downstream of C-type lectin receptors, which recruits and activates HRAS, leading to ERK activation and the production of cytokines. Acts as an important regulator of the intestinal commensal fungi (mycobiota) component of the gut microbiota. Plays an essential role in antifungal immunity against dissemination of gut fungi: acts by promoting induction of antifungal IgG antibodies response in CX3CR1(+) macrophages to confer protection against disseminated C.albicans or C.auris infection. Also mediates immunity against other pathogens, such as certain bacteria, viruses and parasites; CARD9 signaling is however redundant with other innate immune responses. In response to L.monocytogenes infection, required for the production of inflammatory cytokines activated by intracellular peptidoglycan: acts by connecting NOD2 recognition of peptidoglycan to downstream activation of MAP kinases (MAPK) without activating NF-kappa-B. The polypeptide is Caspase recruitment domain-containing protein 9 (Mus musculus (Mouse)).